Reading from the N-terminus, the 216-residue chain is Probable succinyl-CoA:3-ketoacid coenzyme A transferase subunit B (216 aa).

The active site involves Glu47.

It belongs to the 3-oxoacid CoA-transferase subunit B family. In terms of assembly, heterodimer of a subunit A and a subunit B.

The catalysed reaction is a 3-oxo acid + succinyl-CoA = a 3-oxoacyl-CoA + succinate. In Bacillus subtilis (strain 168), this protein is Probable succinyl-CoA:3-ketoacid coenzyme A transferase subunit B (scoB).